A 161-amino-acid polypeptide reads, in one-letter code: Nucleotide-binding protein LHK_01423 (161 aa).

Belongs to the YajQ family.

Its function is as follows. Nucleotide-binding protein. The chain is Nucleotide-binding protein LHK_01423 from Laribacter hongkongensis (strain HLHK9).